The following is a 201-amino-acid chain: 3-isopropylmalate dehydratase small subunit (201 aa).

Belongs to the LeuD family. LeuD type 1 subfamily. Heterodimer of LeuC and LeuD.

The enzyme catalyses (2R,3S)-3-isopropylmalate = (2S)-2-isopropylmalate. It functions in the pathway amino-acid biosynthesis; L-leucine biosynthesis; L-leucine from 3-methyl-2-oxobutanoate: step 2/4. Catalyzes the isomerization between 2-isopropylmalate and 3-isopropylmalate, via the formation of 2-isopropylmaleate. The sequence is that of 3-isopropylmalate dehydratase small subunit from Enterobacter sp. (strain 638).